Consider the following 139-residue polypeptide: D-ribose pyranase (139 aa).

The active-site Proton donor is H20. Substrate is bound by residues D28, H106, and Y128 to N130.

This sequence belongs to the RbsD / FucU family. RbsD subfamily. As to quaternary structure, homodecamer.

Its subcellular location is the cytoplasm. It catalyses the reaction beta-D-ribopyranose = beta-D-ribofuranose. It participates in carbohydrate metabolism; D-ribose degradation; D-ribose 5-phosphate from beta-D-ribopyranose: step 1/2. Functionally, catalyzes the interconversion of beta-pyran and beta-furan forms of D-ribose. The polypeptide is D-ribose pyranase (Serratia proteamaculans (strain 568)).